The chain runs to 274 residues: 2,3,4,5-tetrahydropyridine-2,6-dicarboxylate N-succinyltransferase (274 aa).

Positions 104 and 141 each coordinate substrate.

This sequence belongs to the transferase hexapeptide repeat family. In terms of assembly, homotrimer.

It localises to the cytoplasm. It carries out the reaction (S)-2,3,4,5-tetrahydrodipicolinate + succinyl-CoA + H2O = (S)-2-succinylamino-6-oxoheptanedioate + CoA. It participates in amino-acid biosynthesis; L-lysine biosynthesis via DAP pathway; LL-2,6-diaminopimelate from (S)-tetrahydrodipicolinate (succinylase route): step 1/3. The protein is 2,3,4,5-tetrahydropyridine-2,6-dicarboxylate N-succinyltransferase of Shewanella putrefaciens (strain CN-32 / ATCC BAA-453).